A 368-amino-acid chain; its full sequence is Peptide chain release factor 2 (368 aa).

The interval 36 to 56 (EAQAGDPSLWDDPDHAQKVTS) is disordered. Q250 is modified (N5-methylglutamine).

Belongs to the prokaryotic/mitochondrial release factor family. Post-translationally, methylated by PrmC. Methylation increases the termination efficiency of RF2.

Its subcellular location is the cytoplasm. Its function is as follows. Peptide chain release factor 2 directs the termination of translation in response to the peptide chain termination codons UGA and UAA. The sequence is that of Peptide chain release factor 2 from Corynebacterium aurimucosum (strain ATCC 700975 / DSM 44827 / CIP 107346 / CN-1) (Corynebacterium nigricans).